Here is an 864-residue protein sequence, read N- to C-terminus: Valine--tRNA ligase (864 aa).

The 'HIGH' region signature appears at 42-52; that stretch reads PTISGKLHIGH. Positions 589–593 match the 'KMSKS' region motif; it reads KMSKS. K592 is an ATP binding site.

The protein belongs to the class-I aminoacyl-tRNA synthetase family. ValS type 2 subfamily. As to quaternary structure, monomer.

It localises to the cytoplasm. The enzyme catalyses tRNA(Val) + L-valine + ATP = L-valyl-tRNA(Val) + AMP + diphosphate. Functionally, catalyzes the attachment of valine to tRNA(Val). As ValRS can inadvertently accommodate and process structurally similar amino acids such as threonine, to avoid such errors, it has a 'posttransfer' editing activity that hydrolyzes mischarged Thr-tRNA(Val) in a tRNA-dependent manner. This is Valine--tRNA ligase from Wolbachia pipientis wMel.